The sequence spans 88 residues: Large ribosomal subunit protein bL31B (88 aa).

The protein belongs to the bacterial ribosomal protein bL31 family. Type B subfamily. Part of the 50S ribosomal subunit.

This Pasteurella multocida (strain Pm70) protein is Large ribosomal subunit protein bL31B.